Consider the following 132-residue polypeptide: Translation initiation factor 5A (132 aa).

Lys-36 is subject to Hypusine.

The protein belongs to the eIF-5A family.

It localises to the cytoplasm. In terms of biological role, functions by promoting the formation of the first peptide bond. The sequence is that of Translation initiation factor 5A (eIF5A) from Pyrobaculum islandicum (strain DSM 4184 / JCM 9189 / GEO3).